A 50-amino-acid polypeptide reads, in one-letter code: Protein HokE (50 aa).

A helical transmembrane segment spans residues 5 to 25 (YALVAVIVLCLTVLGFTLLVG).

The protein belongs to the Hok/Gef family.

The protein resides in the cell inner membrane. Its function is as follows. Toxic component of a type I toxin-antitoxin (TA) system. When overexpressed kills cells within minutes; causes collapse of the transmembrane potential and arrest of respiration. Its toxic effect is probably neutralized by an antisense antitoxin Sok RNA. The sequence is that of Protein HokE (hokE) from Escherichia coli O157:H7.